We begin with the raw amino-acid sequence, 95 residues long: SFLADHAIFKCTNIGSSLKFCLLAEGKADVYPRFTRTMEWDTAAGDAVLRAAGGSTVTLDGTPLTYGKTGTAADFDFANPNFISWGGRKRVLEPA.

This sequence belongs to the inositol monophosphatase superfamily.

This is an uncharacterized protein from Rhizobium leguminosarum bv. phaseoli.